The sequence spans 951 residues: Leucine-rich repeat-containing G-protein coupled receptor 4 (951 aa).

Residues 1-24 (MPGPLGLLCFLALGLLGSAGPSGA) form the signal peptide. Positions 25–57 (APPLCAAPCSCDGDRRVDCSGKGLTAVPEGLSA) constitute an LRRNT domain. The Extracellular segment spans residues 25–544 (APPLCAAPCS…LLGSWMIRLT (520 aa)). Disulfide bonds link Cys29–Cys35 and Cys33–Cys43. LRR repeat units follow at residues 58-79 (FTQALDISMNNITQLPEDAFKN), 82-103 (FLEELQLAGNDLSFIHPKALSG), 106-127 (ELKVLTLQNNQLKTVPSEAIRG), 130-151 (ALQSLRLDANHITSVPEDSFEG), 154-177 (QLRHLWLDDNSLTEVPVHPLSNLP), 178-199 (TLQALTLALNKISSIPDFAFTN), 202-223 (SLVVLHLHNNKIRSLSQHCFDG), 226-247 (NLETLDLNYNNLGEFPQAIKAL), 249-270 (SLKELGFHSNSISVIPDGAFDG), and 273-294 (LLRTIHLYDNPLSFVGNSAFHN). A glycan (N-linked (GlcNAc...) asparagine) is linked at Asn68. N-linked (GlcNAc...) asparagine glycosylation is present at Asn199. Asn294 and Asn314 each carry an N-linked (GlcNAc...) asparagine glycan. LRR repeat units lie at residues 320-341 (HLESLTLTGTKISSIPNNLCQE), 344-365 (MLRTLDLSYNNIRDLPSFNGCH), 366-387 (ALEEISLQRNQIYQIKEGTFQG), 390-411 (SLRILDLSRNLIHEIHSRAFAT), and 414-435 (PITNLDVSFNELTSFPTEGLNG). A disulfide bond links Cys339 and Cys364. Cystine bridges form between Cys470-Cys522 and Cys471-Cys476. An N-linked (GlcNAc...) asparagine glycan is attached at Asn505. Residues 545-565 (VWFIFLVALFFNLLVILTTFA) form a helical membrane-spanning segment. Residues 566 to 575 (SCTSLPSSKL) lie on the Cytoplasmic side of the membrane. Residues 576-596 (FIGLISVSNLFMGIYTGILTF) traverse the membrane as a helical segment. The Extracellular segment spans residues 597 to 620 (LDAVSWGRFAEFGIWWETGSGCKV). Cys618 and Cys693 form a disulfide bridge. The chain crosses the membrane as a helical span at residues 621 to 641 (AGFLAVFSSESAIFLLMLATV). At 642–661 (ERSLSAKDIMKNGKSNHLKQ) the chain is on the cytoplasmic side. Residues 662–682 (FRVAALLAFLGATVAGCFPLF) traverse the membrane as a helical segment. Residues 683–703 (HRGEYSASPLCLPFPTGETPS) lie on the Extracellular side of the membrane. A helical membrane pass occupies residues 704–724 (LGFTVTLVLLNSLAFLLMAVI). Over 725–756 (YTKLYCNLEKEDLSENSQSSMIKHVAWLIFTN) the chain is Cytoplasmic. Residues 757 to 777 (CIFFCPVAFFSFAPLITAISI) form a helical membrane-spanning segment. At 778 to 783 (SPEIMK) the chain is on the extracellular side. Residues 784–804 (SVTLIFFPLPACLNPVLYVFF) form a helical membrane-spanning segment. The Cytoplasmic portion of the chain corresponds to 805 to 951 (NPKFKEDWKL…YAYNLPRVKD (147 aa)). Ser920 bears the Phosphoserine mark.

The protein belongs to the G-protein coupled receptor 1 family. In terms of tissue distribution, expressed in multiple steroidogenic tissues: placenta, ovary, testis and adrenal. Expressed also in spinal cord, thyroid, stomach, trachea, heart, pancreas, kidney, prostate and spleen.

It localises to the cell membrane. In terms of biological role, receptor for R-spondins that potentiates the canonical Wnt signaling pathway and is involved in the formation of various organs. Upon binding to R-spondins (RSPO1, RSPO2, RSPO3 or RSPO4), associates with phosphorylated LRP6 and frizzled receptors that are activated by extracellular Wnt receptors, triggering the canonical Wnt signaling pathway to increase expression of target genes. In contrast to classical G-protein coupled receptors, does not activate heterotrimeric G-proteins to transduce the signal. Its function as activator of the Wnt signaling pathway is required for the development of various organs, including liver, kidney, intestine, bone, reproductive tract and eye. May also act as a receptor for norrin (NDP), such results however require additional confirmation in vivo. Required during spermatogenesis to activate the Wnt signaling pathway in peritubular myoid cells. Required for the maintenance of intestinal stem cells and Paneth cell differentiation in postnatal intestinal crypts. Acts as a regulator of bone formation and remodeling. Involved in kidney development; required for maintaining the ureteric bud in an undifferentiated state. Involved in the development of the anterior segment of the eye. Required during erythropoiesis. Also acts as a negative regulator of innate immunity by inhibiting TLR2/TLR4 associated pattern-recognition and pro-inflammatory cytokine production. Plays an important role in regulating the circadian rhythms of plasma lipids, partially through regulating the rhythmic expression of MTTP. Required for proper development of GnRH neurons (gonadotropin-releasing hormone expressing neurons) that control the release of reproductive hormones from the pituitary gland. The chain is Leucine-rich repeat-containing G-protein coupled receptor 4 (LGR4) from Homo sapiens (Human).